Consider the following 38-residue polypeptide: Large ribosomal subunit protein bL36 (38 aa).

Belongs to the bacterial ribosomal protein bL36 family.

The sequence is that of Large ribosomal subunit protein bL36 from Myxococcus xanthus (strain DK1622).